A 123-amino-acid polypeptide reads, in one-letter code: Histone H2B (123 aa).

The interval Met-1–Arg-31 is disordered. Residues Gly-9–Arg-31 show a composition bias toward basic residues. Ser-110 carries O-linked (GlcNAc) serine glycosylation. A Glycyl lysine isopeptide (Lys-Gly) (interchain with G-Cter in ubiquitin) cross-link involves residue Lys-118.

This sequence belongs to the histone H2B family. As to quaternary structure, the nucleosome is a histone octamer containing two molecules each of H2A, H2B, H3 and H4 assembled in one H3-H4 heterotetramer and two H2A-H2B heterodimers. The octamer wraps approximately 147 bp of DNA. In terms of processing, monoubiquitination of Lys-118 gives a specific tag for epigenetic transcriptional activation and is also prerequisite for histone H3 'Lys-4' and 'Lys-79' methylation. Post-translationally, glcNAcylation at Ser-110 promotes monoubiquitination of Lys-118. It fluctuates in response to extracellular glucose, and associates with transcribed genes.

It localises to the nucleus. The protein resides in the chromosome. Its function is as follows. Core component of nucleosome. Nucleosomes wrap and compact DNA into chromatin, limiting DNA accessibility to the cellular machineries which require DNA as a template. Histones thereby play a central role in transcription regulation, DNA repair, DNA replication and chromosomal stability. DNA accessibility is regulated via a complex set of post-translational modifications of histones, also called histone code, and nucleosome remodeling. The sequence is that of Histone H2B from Platynereis dumerilii (Dumeril's clam worm).